Here is a 452-residue protein sequence, read N- to C-terminus: Probable E3 ubiquitin-protein ligase ARI15 (452 aa).

Residues 22–256 (SRVYCGICSN…GTSGSCLAPA (235 aa)) are TRIAD supradomain. Residues Cys-26, Cys-29, Cys-54, His-56, Cys-59, Cys-62, Cys-83, Cys-88, Cys-128, Cys-133, Cys-154, Cys-156, Cys-161, Cys-164, His-169, Cys-174, Cys-208, Cys-211, Cys-229, Cys-231, Cys-236, Cys-239, His-246, and Cys-252 each coordinate Zn(2+). The segment at 26–88 (CGICSNIGDD…TAISCPDRDC (63 aa)) adopts an RING-type 1 zinc-finger fold. The IBR-type zinc finger occupies 106–174 (AMYELYILKS…MLESHRPVTC (69 aa)). The RING-type 2; atypical zinc finger occupies 208 to 239 (CPHCFIPVEIDGERPWAQFLTCVCSGRFCWKC). A RanBP2-type zinc finger spans residues 414–445 (NYGGPYWLCDRCTYGNSWFQRACKMCCDPTAS).

Belongs to the RBR family. Ariadne subfamily. It depends on Zn(2+) as a cofactor. Ubiquitous.

It carries out the reaction [E2 ubiquitin-conjugating enzyme]-S-ubiquitinyl-L-cysteine + [acceptor protein]-L-lysine = [E2 ubiquitin-conjugating enzyme]-L-cysteine + [acceptor protein]-N(6)-ubiquitinyl-L-lysine.. It participates in protein modification; protein ubiquitination. Functionally, might act as an E3 ubiquitin-protein ligase, or as part of E3 complex, which accepts ubiquitin from specific E2 ubiquitin-conjugating enzymes and then transfers it to substrates. The protein is Probable E3 ubiquitin-protein ligase ARI15 (ARI15) of Arabidopsis thaliana (Mouse-ear cress).